The sequence spans 384 residues: 8-amino-7-oxononanoate synthase (384 aa).

A substrate-binding site is contributed by arginine 21. Residue 108–109 (GY) coordinates pyridoxal 5'-phosphate. Histidine 133 provides a ligand contact to substrate. The pyridoxal 5'-phosphate site is built by serine 179, histidine 207, and threonine 233. An N6-(pyridoxal phosphate)lysine modification is found at lysine 236. Threonine 350 is a substrate binding site.

Belongs to the class-II pyridoxal-phosphate-dependent aminotransferase family. BioF subfamily. In terms of assembly, homodimer. Pyridoxal 5'-phosphate serves as cofactor.

It carries out the reaction 6-carboxyhexanoyl-[ACP] + L-alanine + H(+) = (8S)-8-amino-7-oxononanoate + holo-[ACP] + CO2. The protein operates within cofactor biosynthesis; biotin biosynthesis. Catalyzes the decarboxylative condensation of pimeloyl-[acyl-carrier protein] and L-alanine to produce 8-amino-7-oxononanoate (AON), [acyl-carrier protein], and carbon dioxide. This chain is 8-amino-7-oxononanoate synthase, found in Buchnera aphidicola subsp. Baizongia pistaciae (strain Bp).